The following is a 91-amino-acid chain: MAQKKGGGSTRNGRDSQPKMLGVKVFGGQRITAGSIIVRQRGTRFHPGSNVGMGKDHSLFALVDGQVSFGIKGALSKPTVNVTPAASAPPV.

Gly residues predominate over residues 1-10; it reads MAQKKGGGST. The segment at 1–20 is disordered; that stretch reads MAQKKGGGSTRNGRDSQPKM.

It belongs to the bacterial ribosomal protein bL27 family.

The polypeptide is Large ribosomal subunit protein bL27 (Verminephrobacter eiseniae (strain EF01-2)).